Reading from the N-terminus, the 351-residue chain is Probable sugar phosphate/phosphate translocator At5g11230 (351 aa).

The next 10 helical transmembrane spans lie at 15 to 35, 49 to 69, 89 to 109, 113 to 133, 141 to 161, 165 to 185, 205 to 225, 236 to 256, 263 to 283, and 286 to 306; these read IVLS…VIVY, FPIS…FLII, VVPI…AYIY, SFIQ…GVLF, DTMM…YGEA, VWGV…LVLI, VAPC…FPVL, AIFG…FLLV, TMNV…WSVI, and TVTP…AYYN. One can recognise an EamA domain in the interval 38 to 156; it reads YILDKKMYNW…LSISFGVAIA (119 aa). The segment at 321 to 351 is disordered; it reads KKIQQADEESGRLLEEREGDVEGKKNDQSGN.

The protein belongs to the TPT transporter family. TPT (TC 2.A.7.9) subfamily.

The protein localises to the membrane. The polypeptide is Probable sugar phosphate/phosphate translocator At5g11230 (Arabidopsis thaliana (Mouse-ear cress)).